A 390-amino-acid polypeptide reads, in one-letter code: Copper-containing nitrite reductase (390 aa).

Positions 1–18 (MKRQALAAMIASLFALAA) are cleaved as a signal peptide. Cys-19 is lipidated: N-palmitoyl cysteine. The S-diacylglycerol cysteine moiety is linked to residue Cys-19. The interval 30–51 (ETPAAAAEAASSAAQTAAETPS) is disordered. 2 consecutive Plastocyanin-like domains span residues 101-195 (WTFD…ILVE) and 245-346 (GHVG…LKVE). Residues His-134, His-139, His-174, Cys-175, His-183, and Met-188 each coordinate Cu cation. Residue His-139 coordinates substrate. A substrate-binding site is contributed by His-280. Residue His-329 coordinates Cu cation. The interval 367–390 (GAAPAASAPAASAPAASASEKSVY) is disordered. Positions 368–390 (AAPAASAPAASAPAASASEKSVY) are enriched in low complexity. 3 consecutive repeat copies span residues 371 to 375 (AASAP), 376 to 380 (AASAP), and 381 to 385 (AASAS). Positions 371–385 (AASAPAASAPAASAS) are 3 X 5 AA tandem repeats of A-A-S-A-P.

This sequence belongs to the multicopper oxidase family. In terms of assembly, homotrimer. Cu(+) is required as a cofactor. Requires Cu(2+) as cofactor.

The protein resides in the cell outer membrane. It carries out the reaction nitric oxide + Fe(III)-[cytochrome c] + H2O = Fe(II)-[cytochrome c] + nitrite + 2 H(+). In terms of biological role, catalyzes the reduction of nitrite to nitric oxide (NO). It could be essential for growth and survival in oxygen-depleted environments. This is Copper-containing nitrite reductase (aniA) from Neisseria meningitidis serogroup B (strain ATCC BAA-335 / MC58).